Consider the following 238-residue polypeptide: Large ribosomal subunit protein uL2 (238 aa).

The interval 198 to 238 is disordered; that stretch reads NHPHGGGSHQSPSFPTTVSRNAPPGRKVGHIAARSTGRRKR. Over residues 206 to 217 the composition is skewed to polar residues; that stretch reads HQSPSFPTTVSR.

It belongs to the universal ribosomal protein uL2 family. Part of the 50S ribosomal subunit. Forms a bridge to the 30S subunit in the 70S ribosome.

Functionally, one of the primary rRNA binding proteins. Required for association of the 30S and 50S subunits to form the 70S ribosome, for tRNA binding and peptide bond formation. It has been suggested to have peptidyltransferase activity; this is somewhat controversial. Makes several contacts with the 16S rRNA in the 70S ribosome. In Hyperthermus butylicus (strain DSM 5456 / JCM 9403 / PLM1-5), this protein is Large ribosomal subunit protein uL2.